Here is a 567-residue protein sequence, read N- to C-terminus: Potassium-transporting ATPase potassium-binding subunit (567 aa).

Helical transmembrane passes span 11–31 (LYLL…AALL), 67–87 (AAAI…LQRW), 136–156 (GLAV…VALV), 179–199 (LWLL…QGVV), 255–275 (FSNW…VVMF), 286–306 (VVLL…VYLA), 333–353 (FGVL…CGAV), 363–383 (LGGG…GGVG), 385–405 (GLYG…LMIG), 422–442 (LVSV…AIAV), 489–509 (LMLA…VLAL), and 532–552 (LFVV…YIPA).

This sequence belongs to the KdpA family. In terms of assembly, the system is composed of three essential subunits: KdpA, KdpB and KdpC.

The protein resides in the cell inner membrane. Functionally, part of the high-affinity ATP-driven potassium transport (or Kdp) system, which catalyzes the hydrolysis of ATP coupled with the electrogenic transport of potassium into the cytoplasm. This subunit binds the periplasmic potassium ions and delivers the ions to the membrane domain of KdpB through an intramembrane tunnel. The protein is Potassium-transporting ATPase potassium-binding subunit of Laribacter hongkongensis (strain HLHK9).